A 555-amino-acid polypeptide reads, in one-letter code: Energy-dependent translational throttle protein EttA (555 aa).

2 consecutive ABC transporter domains span residues 6-259 and 324-550; these read YTMH…AQEA and LEVS…RIKY. 39–46 contacts ATP; the sequence is GLNGAGKS. An arm region spans residues 95-139; that stretch reads SEVVNALKRLDEVYALYADPDADFDKLAAEQGRLEEIIQAHDGHN. Positions 242 to 322 are ptIM; it reads GNYSSWLEQK…IPPGPRLGDK (81 aa). 356-363 lines the ATP pocket; the sequence is GPNGAGKS.

It belongs to the ABC transporter superfamily. ABCF family. Translational throttle EttA subfamily. Monomer. Probably contacts ribosomal proteins L1, L5, L33 and S7, the 16S and 23S rRNA and the P-site containing tRNA(fMet).

The protein localises to the cytoplasm. It catalyses the reaction ATP + H2O = ADP + phosphate + H(+). In terms of biological role, a translation factor that gates the progression of the 70S ribosomal initiation complex (IC, containing tRNA(fMet) in the P-site) into the translation elongation cycle by using a mechanism sensitive to the ATP/ADP ratio. Binds to the 70S ribosome E-site where it modulates the state of the translating ribosome during subunit translocation. ATP hydrolysis probably frees it from the ribosome, which can enter the elongation phase. The sequence is that of Energy-dependent translational throttle protein EttA from Escherichia coli O157:H7.